A 262-amino-acid polypeptide reads, in one-letter code: Type III pantothenate kinase (262 aa).

9-16 (DIGNTNIV) is a binding site for ATP. Substrate contacts are provided by residues Tyr103 and 110-113 (GVDR). The active-site Proton acceptor is the Asp112. Residue Asp132 participates in K(+) binding. Residue Thr135 participates in ATP binding. Thr187 lines the substrate pocket.

It belongs to the type III pantothenate kinase family. Homodimer. NH4(+) serves as cofactor. Requires K(+) as cofactor.

It is found in the cytoplasm. It carries out the reaction (R)-pantothenate + ATP = (R)-4'-phosphopantothenate + ADP + H(+). It functions in the pathway cofactor biosynthesis; coenzyme A biosynthesis; CoA from (R)-pantothenate: step 1/5. Functionally, catalyzes the phosphorylation of pantothenate (Pan), the first step in CoA biosynthesis. This Finegoldia magna (strain ATCC 29328 / DSM 20472 / WAL 2508) (Peptostreptococcus magnus) protein is Type III pantothenate kinase.